A 278-amino-acid polypeptide reads, in one-letter code: Shikimate dehydrogenase (NADP(+)) (278 aa).

Shikimate is bound by residues 19 to 21 (SLS) and threonine 66. Catalysis depends on lysine 70, which acts as the Proton acceptor. Aspartate 82 is an NADP(+) binding site. Shikimate is bound by residues asparagine 91 and aspartate 107. Residues 133 to 137 (GSGGA), 157 to 162 (NRTRAR), and isoleucine 222 each bind NADP(+). Tyrosine 224 is a binding site for shikimate. An NADP(+)-binding site is contributed by glycine 245.

Belongs to the shikimate dehydrogenase family. In terms of assembly, homodimer.

It carries out the reaction shikimate + NADP(+) = 3-dehydroshikimate + NADPH + H(+). It functions in the pathway metabolic intermediate biosynthesis; chorismate biosynthesis; chorismate from D-erythrose 4-phosphate and phosphoenolpyruvate: step 4/7. Its function is as follows. Involved in the biosynthesis of the chorismate, which leads to the biosynthesis of aromatic amino acids. Catalyzes the reversible NADPH linked reduction of 3-dehydroshikimate (DHSA) to yield shikimate (SA). The protein is Shikimate dehydrogenase (NADP(+)) of Jannaschia sp. (strain CCS1).